A 443-amino-acid chain; its full sequence is Tubulin beta chain (443 aa).

GTP is bound by residues Gln11, Glu69, Ser138, Gly142, Thr143, Gly144, Asn204, and Asn226. Glu69 lines the Mg(2+) pocket. Positions 424-443 (QYQDASAEEEGEFEGEEEEA) are disordered. Residues 429-443 (SAEEEGEFEGEEEEA) show a composition bias toward acidic residues.

The protein belongs to the tubulin family. As to quaternary structure, dimer of alpha and beta chains. A typical microtubule is a hollow water-filled tube with an outer diameter of 25 nm and an inner diameter of 15 nM. Alpha-beta heterodimers associate head-to-tail to form protofilaments running lengthwise along the microtubule wall with the beta-tubulin subunit facing the microtubule plus end conferring a structural polarity. Microtubules usually have 13 protofilaments but different protofilament numbers can be found in some organisms and specialized cells. It depends on Mg(2+) as a cofactor.

It localises to the cytoplasm. The protein localises to the cytoskeleton. Tubulin is the major constituent of microtubules, a cylinder consisting of laterally associated linear protofilaments composed of alpha- and beta-tubulin heterodimers. Microtubules grow by the addition of GTP-tubulin dimers to the microtubule end, where a stabilizing cap forms. Below the cap, tubulin dimers are in GDP-bound state, owing to GTPase activity of alpha-tubulin. In Chlamydomonas incerta, this protein is Tubulin beta chain (TUBB).